The following is a 157-amino-acid chain: 6,7-dimethyl-8-ribityllumazine synthase (157 aa).

5-amino-6-(D-ribitylamino)uracil is bound by residues F23, 57 to 59 (AFE), and 81 to 83 (AVI). 86 to 87 (AT) contacts (2S)-2-hydroxy-3-oxobutyl phosphate. H89 functions as the Proton donor in the catalytic mechanism. A 5-amino-6-(D-ribitylamino)uracil-binding site is contributed by F114. (2S)-2-hydroxy-3-oxobutyl phosphate is bound at residue R128.

It belongs to the DMRL synthase family.

It catalyses the reaction (2S)-2-hydroxy-3-oxobutyl phosphate + 5-amino-6-(D-ribitylamino)uracil = 6,7-dimethyl-8-(1-D-ribityl)lumazine + phosphate + 2 H2O + H(+). It functions in the pathway cofactor biosynthesis; riboflavin biosynthesis; riboflavin from 2-hydroxy-3-oxobutyl phosphate and 5-amino-6-(D-ribitylamino)uracil: step 1/2. Catalyzes the formation of 6,7-dimethyl-8-ribityllumazine by condensation of 5-amino-6-(D-ribitylamino)uracil with 3,4-dihydroxy-2-butanone 4-phosphate. This is the penultimate step in the biosynthesis of riboflavin. The polypeptide is 6,7-dimethyl-8-ribityllumazine synthase (Desulforapulum autotrophicum (strain ATCC 43914 / DSM 3382 / VKM B-1955 / HRM2) (Desulfobacterium autotrophicum)).